Consider the following 1066-residue polypeptide: Isoleucine--tRNA ligase (1066 aa).

The short motif at 47-57 (PYTTGYIHLGT) is the 'HIGH' region element. A 'KMSKS' region motif is present at residues 594 to 598 (KMSKS). Lys-597 lines the ATP pocket.

Belongs to the class-I aminoacyl-tRNA synthetase family. IleS type 2 subfamily. Monomer. Requires Zn(2+) as cofactor.

The protein localises to the cytoplasm. The catalysed reaction is tRNA(Ile) + L-isoleucine + ATP = L-isoleucyl-tRNA(Ile) + AMP + diphosphate. Its function is as follows. Catalyzes the attachment of isoleucine to tRNA(Ile). As IleRS can inadvertently accommodate and process structurally similar amino acids such as valine, to avoid such errors it has two additional distinct tRNA(Ile)-dependent editing activities. One activity is designated as 'pretransfer' editing and involves the hydrolysis of activated Val-AMP. The other activity is designated 'posttransfer' editing and involves deacylation of mischarged Val-tRNA(Ile). This Methanocorpusculum labreanum (strain ATCC 43576 / DSM 4855 / Z) protein is Isoleucine--tRNA ligase.